The chain runs to 59 residues: Dybowskin-1CDYa (59 aa).

Residues 1-22 form the signal peptide; the sequence is MFTLKKSLLLLFFLGTINFSLC. Positions 23–44 are excised as a propeptide; that stretch reads EEERNAEEERRDYPEERDVEVE.

The protein belongs to the frog skin active peptide (FSAP) family. Brevinin subfamily. As to expression, expressed by the skin glands.

It is found in the secreted. Functionally, antimicrobial peptide. Has activity against the Gram-positive bacterium S.aureus (MIC=6 uM) and the Gram-negative bacterium E.coli (MIC=3 uM). Lacks hemolytic activity against human erythrocytes. The chain is Dybowskin-1CDYa from Rana dybowskii (Dybovsky's frog).